The chain runs to 218 residues: Small ribosomal subunit protein uS3 (218 aa).

The KH type-2 domain maps to 38–106; the sequence is IRDYVAKRLS…RVHINIVEIK (69 aa).

It belongs to the universal ribosomal protein uS3 family. As to quaternary structure, part of the 30S ribosomal subunit. Forms a tight complex with proteins S10 and S14.

Binds the lower part of the 30S subunit head. Binds mRNA in the 70S ribosome, positioning it for translation. The chain is Small ribosomal subunit protein uS3 from Listeria monocytogenes serotype 4b (strain F2365).